The chain runs to 460 residues: Alpha-amylase (460 aa).

A signal peptide spans 1-21; sequence MASRTLSGALALAAAATAVLA. Asn121, Gln167, and Asp176 together coordinate Ca(2+). Asp206 (nucleophile) is an active-site residue. Position 210 (His210) interacts with Ca(2+). Glu233 (proton donor) is an active-site residue.

This sequence belongs to the glycosyl hydrolase 13 family. In terms of assembly, monomer. It depends on Ca(2+) as a cofactor.

The catalysed reaction is Endohydrolysis of (1-&gt;4)-alpha-D-glucosidic linkages in polysaccharides containing three or more (1-&gt;4)-alpha-linked D-glucose units.. The polypeptide is Alpha-amylase (amy) (Streptomyces thermoviolaceus).